Consider the following 57-residue polypeptide: Ribosome modulation factor 2 (57 aa).

Residues 1 to 24 (MKRQKRDKLGRAHSNGYQAGLGGK) are disordered.

It belongs to the ribosome modulation factor family.

The protein resides in the cytoplasm. During stationary phase, converts 70S ribosomes to an inactive dimeric form (100S ribosomes). This Colwellia psychrerythraea (strain 34H / ATCC BAA-681) (Vibrio psychroerythus) protein is Ribosome modulation factor 2.